A 438-amino-acid polypeptide reads, in one-letter code: Coenzyme A disulfide reductase (438 aa).

An FAD-binding site is contributed by 8 to 33; it reads GAVAGGATCASQIRRLDKESDIIIFE. Substrate-binding residues include T15, Q19, R22, S39, and N42. The active-site Nucleophile is the C43. C43 serves as the catalytic Redox-active. K71 provides a ligand contact to substrate. 151 to 166 is a binding site for NADP(+); sequence VLVIGAGYVSLEVLEN. 267-277 contributes to the FAD binding site; it reads TNVPNIYAIGD. H299 contacts substrate. Y419 is an FAD binding site. K427 provides a ligand contact to substrate.

The protein belongs to the class-III pyridine nucleotide-disulfide oxidoreductase family. As to quaternary structure, homodimer. It depends on FAD as a cofactor.

It catalyses the reaction NADP(+) + 2 CoA = CoA-disulfide + NADPH + H(+). Functionally, catalyzes specifically the NADPH-dependent reduction of coenzyme A disulfide. The chain is Coenzyme A disulfide reductase from Staphylococcus aureus (strain Mu3 / ATCC 700698).